Consider the following 473-residue polypeptide: Photosystem II CP43 reaction center protein (473 aa).

Residues 1–14 constitute a propeptide that is removed on maturation; it reads MKTLYSLRRFYPVE. Position 15 is an N-acetylthreonine (threonine 15). Residue threonine 15 is modified to Phosphothreonine. 5 helical membrane-spanning segments follow: residues 69–93, 134–155, 178–200, 255–275, and 291–312; these read LFEV…PHLA, LLGP…KDRN, KALY…RKIT, KPFA…LSYS, and WFNN…ASQA. Glutamate 367 provides a ligand contact to [CaMn4O5] cluster. A helical membrane pass occupies residues 447–471; that stretch reads RARAAAAGFEKGIDRDFEPVLSMTP.

The protein belongs to the PsbB/PsbC family. PsbC subfamily. As to quaternary structure, PSII is composed of 1 copy each of membrane proteins PsbA, PsbB, PsbC, PsbD, PsbE, PsbF, PsbH, PsbI, PsbJ, PsbK, PsbL, PsbM, PsbT, PsbX, PsbY, PsbZ, Psb30/Ycf12, at least 3 peripheral proteins of the oxygen-evolving complex and a large number of cofactors. It forms dimeric complexes. Binds multiple chlorophylls and provides some of the ligands for the Ca-4Mn-5O cluster of the oxygen-evolving complex. It may also provide a ligand for a Cl- that is required for oxygen evolution. PSII binds additional chlorophylls, carotenoids and specific lipids. is required as a cofactor.

It is found in the plastid. The protein localises to the chloroplast thylakoid membrane. Functionally, one of the components of the core complex of photosystem II (PSII). It binds chlorophyll and helps catalyze the primary light-induced photochemical processes of PSII. PSII is a light-driven water:plastoquinone oxidoreductase, using light energy to abstract electrons from H(2)O, generating O(2) and a proton gradient subsequently used for ATP formation. The protein is Photosystem II CP43 reaction center protein of Helianthus annuus (Common sunflower).